The chain runs to 281 residues: Diphthine methyl ester synthase (281 aa).

S-adenosyl-L-methionine-binding positions include L9, D84, G87, S112–I113, and L163. The residue at position 171 (S171) is a Phosphoserine. The S-adenosyl-L-methionine site is built by V225 and H250.

Belongs to the diphthine synthase family.

It carries out the reaction 2-[(3S)-amino-3-carboxypropyl]-L-histidyl-[translation elongation factor 2] + 4 S-adenosyl-L-methionine = diphthine methyl ester-[translation elongation factor 2] + 4 S-adenosyl-L-homocysteine + 3 H(+). It functions in the pathway protein modification; peptidyl-diphthamide biosynthesis. Its function is as follows. S-adenosyl-L-methionine-dependent methyltransferase that catalyzes four methylations of the modified target histidine residue in translation elongation factor 2 (EF-2), to form an intermediate called diphthine methyl ester. The four successive methylation reactions represent the second step of diphthamide biosynthesis. The protein is Diphthine methyl ester synthase (Dph5) of Mus musculus (Mouse).